Reading from the N-terminus, the 346-residue chain is Uroporphyrinogen decarboxylase (346 aa).

Residues 21–25 (RQAGR), Phe40, Asp71, Tyr146, Ser201, and His316 each bind substrate.

The protein belongs to the uroporphyrinogen decarboxylase family. As to quaternary structure, homodimer.

It is found in the cytoplasm. The catalysed reaction is uroporphyrinogen III + 4 H(+) = coproporphyrinogen III + 4 CO2. It participates in porphyrin-containing compound metabolism; protoporphyrin-IX biosynthesis; coproporphyrinogen-III from 5-aminolevulinate: step 4/4. Its function is as follows. Catalyzes the decarboxylation of four acetate groups of uroporphyrinogen-III to yield coproporphyrinogen-III. The chain is Uroporphyrinogen decarboxylase from Rickettsia conorii (strain ATCC VR-613 / Malish 7).